The following is a 70-amino-acid chain: Guanine nucleotide-binding protein G(I)/G(S)/G(O) subunit gamma-8 (70 aa).

The residue at position 67 (C67) is a Cysteine methyl ester. The S-geranylgeranyl cysteine moiety is linked to residue C67. A propeptide spans T68–L70 (removed in mature form).

It belongs to the G protein gamma family. In terms of assembly, g proteins are composed of 3 units, alpha, beta and gamma. In terms of tissue distribution, detected in the olfactory epithelium, the vomeronasal epithelium and, to a lesser extent, the olfactory bulb.

Its subcellular location is the cell membrane. Functionally, guanine nucleotide-binding proteins (G proteins) are involved as a modulator or transducer in various transmembrane signaling systems. The beta and gamma chains are required for the GTPase activity, for replacement of GDP by GTP, and for G protein-effector interaction. This subunit may have a very specific role in the development and turnover of olfactory and vomeronasal neurons. The chain is Guanine nucleotide-binding protein G(I)/G(S)/G(O) subunit gamma-8 (Gng8) from Rattus norvegicus (Rat).